An 89-amino-acid chain; its full sequence is UPF0335 protein CCNA_03428 (89 aa).

This sequence belongs to the UPF0335 family.

The sequence is that of UPF0335 protein CCNA_03428 from Caulobacter vibrioides (strain NA1000 / CB15N) (Caulobacter crescentus).